The sequence spans 346 residues: Inositol 2-dehydrogenase/D-chiro-inositol 3-dehydrogenase (346 aa).

Over residues 322–331 (GREESIELPK) the composition is skewed to basic and acidic residues. Residues 322–346 (GREESIELPKKPAFYQHSAATPEQV) form a disordered region.

This sequence belongs to the Gfo/Idh/MocA family. In terms of assembly, homotetramer.

It carries out the reaction myo-inositol + NAD(+) = scyllo-inosose + NADH + H(+). The enzyme catalyses 1D-chiro-inositol + NAD(+) = scyllo-inosine + NADH + H(+). Its pathway is polyol metabolism; myo-inositol degradation into acetyl-CoA; acetyl-CoA from myo-inositol: step 1/7. Its function is as follows. Involved in the oxidation of myo-inositol (MI) and D-chiro-inositol (DCI) to 2-keto-myo-inositol (2KMI or 2-inosose) and 1-keto-D-chiro-inositol (1KDCI), respectively. The sequence is that of Inositol 2-dehydrogenase/D-chiro-inositol 3-dehydrogenase from Shouchella clausii (strain KSM-K16) (Alkalihalobacillus clausii).